Here is a 320-residue protein sequence, read N- to C-terminus: rRNA methyltransferase 2, mitochondrial (320 aa).

A mitochondrion-targeting transit peptide spans 1-18; sequence MILVYNRIRSIISSSLGR. S-adenosyl-L-methionine-binding positions include 83–86, Asp-104, 178–179, and Asp-203; these read PGAW and DI. Lys-264 (proton acceptor) is an active-site residue.

Belongs to the class I-like SAM-binding methyltransferase superfamily. RNA methyltransferase RlmE family.

Its subcellular location is the mitochondrion. It carries out the reaction uridine(2791) in 21S rRNA + S-adenosyl-L-methionine = 2'-O-methyluridine(2791) in 21S rRNA + S-adenosyl-L-homocysteine + H(+). S-adenosyl-L-methionine-dependent 2'-O-ribose methyltransferase that catalyzes the formation of 2'-O-methyluridine at position 2791 (Um2791) in the 21S mitochondrial large subunit ribosomal RNA (mtLSU rRNA), a universally conserved modification in the peptidyl transferase domain of the mtLSU rRNA. In Saccharomyces cerevisiae (strain ATCC 204508 / S288c) (Baker's yeast), this protein is rRNA methyltransferase 2, mitochondrial.